The following is a 458-amino-acid chain: MLLLLPEITLTLIALLGQCFALMIPNKNRIIYNIVILLCIISIFLTFKYSSYEGIWHSFATERNIGISKSIILLFTIVSLIIYRDYSILVGETLKFEFITLMLLSIVGIFVAISSRNFLLLFCGMELTALTSYALAGFKLNDIKSSEGALKYFILGSLVSCLSLFGISFIYGFGGSIQFDDILHQLNNDSEIKPGLIIGIVLFLSSIFFKLASSPLHFWIPDVYEGSPISSVTYFTAASKIGMVIVLLNISKLIIGNYYPINYNLIKIIAILSMLFGAFGAIRQTSLKRLMAYSTILNIGYVLIGVLLHNQEGYKAALLYILIYAVVSIGFFTCLIMLFGKDVDNASFKTIEGIAETHKTIAALISIVMFSMIGIPPLTGFFGKYYLFYQAINKKEFTLAYCGIFTSVVAAFYYLKVVKAMYFSKKIAIIKLPMQYGLLLINYLVLGFLLFGSFIILF.

The next 14 helical transmembrane spans lie at 2 to 22 (LLLLPEITLTLIALLGQCFAL), 30 to 50 (IIYNIVILLCIISIFLTFKYS), 71 to 91 (IILLFTIVSLIIYRDYSILVG), 93 to 113 (TLKFEFITLMLLSIVGIFVAI), 118 to 138 (FLLLFCGMELTALTSYALAGF), 153 to 173 (FILGSLVSCLSLFGISFIYGF), 196 to 216 (LIIGIVLFLSSIFFKLASSPL), 235 to 255 (FTAASKIGMVIVLLNISKLII), 261 to 281 (INYNLIKIIAILSMLFGAFGA), 290 to 310 (LMAYSTILNIGYVLIGVLLHN), 319 to 339 (LYILIYAVVSIGFFTCLIMLF), 361 to 381 (IAALISIVMFSMIGIPPLTGF), 397 to 417 (FTLAYCGIFTSVVAAFYYLKV), and 438 to 458 (LLLINYLVLGFLLFGSFIILF).

It belongs to the complex I subunit 2 family. NDH-1 is composed of 14 different subunits. Subunits NuoA, H, J, K, L, M, N constitute the membrane sector of the complex.

It is found in the cell inner membrane. It catalyses the reaction a quinone + NADH + 5 H(+)(in) = a quinol + NAD(+) + 4 H(+)(out). In terms of biological role, NDH-1 shuttles electrons from NADH, via FMN and iron-sulfur (Fe-S) centers, to quinones in the respiratory chain. The immediate electron acceptor for the enzyme in this species is believed to be ubiquinone. Couples the redox reaction to proton translocation (for every two electrons transferred, four hydrogen ions are translocated across the cytoplasmic membrane), and thus conserves the redox energy in a proton gradient. This is NADH-quinone oxidoreductase subunit N from Rickettsia prowazekii (strain Madrid E).